Reading from the N-terminus, the 960-residue chain is Angiomotin-like protein 1 (960 aa).

The disordered stretch occupies residues 196-248; that stretch reads SQFFRGQQPPPPPPQQQPGAVGHSYYMAGGASQKARTEGRPTVSRANSGQAHK. Phosphoserine is present on residues Ser-243, Ser-271, and Ser-297. Residues 261 to 281 adopt a coiled-coil conformation; it reads RSLSERIMQLSLERNGAKQHL. 3 disordered regions span residues 277-317, 381-407, and 413-432; these read AKQH…EYPF, LPFP…LHSV, and PPMA…SQQL. Residues 388–401 are compositionally biased toward low complexity; it reads QQHSPVSSQNSSVS. 2 coiled-coil regions span residues 440-641 and 667-697; these read VERA…WLER and ALME…VEES. A Phosphoserine modification is found at Ser-722. Residues 731 to 761 are a coiled coil; sequence SLEAHIWQEEEEVVQATRRCQDMEYTIKNLH. The segment at 775-826 is disordered; that stretch reads QQRSRKDAGKTDSSSLRPARSVPSIAAATGTHSRQTSLTSSQLAEERKEEKT. 3 positions are modified to phosphoserine: Ser-795, Ser-807, and Ser-830. The segment covering 804–817 has biased composition (polar residues); sequence GTHSRQTSLTSSQL. The segment at 842–952 is disordered; the sequence is NDHASTPLLP…NLLHKPEFPD (111 aa). Residues 845–870 are compositionally biased toward low complexity; that stretch reads ASTPLLPTPSAATLSPPTPGTSASSA. A compositionally biased stretch (polar residues) spans 898-911; the sequence is PTRSRLSGTPSNSP. Phosphoserine is present on Ser-904. A Phosphothreonine modification is found at Thr-906. The residue at position 910 (Ser-910) is a Phosphoserine. The short motif at 957 to 960 is the PDZ-binding element; the sequence is EVLI.

Belongs to the angiomotin family. In terms of processing, polyubiquitinated by NEDD4, leading to proteasomal degradation.

The protein resides in the cell junction. The protein localises to the tight junction. Functionally, inhibits the Wnt/beta-catenin signaling pathway, probably by recruiting CTNNB1 to recycling endosomes and hence preventing its translocation to the nucleus. This chain is Angiomotin-like protein 1 (AMOTL1), found in Bos taurus (Bovine).